The chain runs to 556 residues: Formate--tetrahydrofolate ligase (556 aa).

Residue 65–72 (TPAGEGKS) coordinates ATP.

Belongs to the formate--tetrahydrofolate ligase family.

It catalyses the reaction (6S)-5,6,7,8-tetrahydrofolate + formate + ATP = (6R)-10-formyltetrahydrofolate + ADP + phosphate. It functions in the pathway one-carbon metabolism; tetrahydrofolate interconversion. The chain is Formate--tetrahydrofolate ligase from Clostridium acetobutylicum (strain ATCC 824 / DSM 792 / JCM 1419 / IAM 19013 / LMG 5710 / NBRC 13948 / NRRL B-527 / VKM B-1787 / 2291 / W).